We begin with the raw amino-acid sequence, 333 residues long: Mitochondrial fission regulator 1 (333 aa).

Ser-119 is subject to Phosphoserine. Residues 286-307 (YRSDSQDEVEKGVPKSESEATS) are compositionally biased toward basic and acidic residues. The segment at 286 to 315 (YRSDSQDEVEKGVPKSESEATSERVLFGPH) is disordered.

This sequence belongs to the MTFR1 family.

The protein resides in the mitochondrion. Functionally, may play a role in mitochondrial aerobic respiration. May also regulate mitochondrial organization and fission. The sequence is that of Mitochondrial fission regulator 1 (MTFR1) from Pongo abelii (Sumatran orangutan).